The chain runs to 185 residues: Elongation factor P (185 aa).

The protein belongs to the elongation factor P family.

Its subcellular location is the cytoplasm. The protein operates within protein biosynthesis; polypeptide chain elongation. In terms of biological role, involved in peptide bond synthesis. Stimulates efficient translation and peptide-bond synthesis on native or reconstituted 70S ribosomes in vitro. Probably functions indirectly by altering the affinity of the ribosome for aminoacyl-tRNA, thus increasing their reactivity as acceptors for peptidyl transferase. The sequence is that of Elongation factor P from Bacillus mycoides (strain KBAB4) (Bacillus weihenstephanensis).